We begin with the raw amino-acid sequence, 1387 residues long: Mediator of RNA polymerase II transcription subunit 13 (1387 aa).

Disordered regions lie at residues 81-102 (ELNN…PEFS), 354-400 (HSAN…ESYS), and 620-676 (SVNS…DIPM). Polar residues-rich tracts occupy residues 354–367 (HSAN…STGE) and 390–400 (SRQNFPTESYS).

This sequence belongs to the Mediator complex subunit 13 family. As to quaternary structure, component of the SRB8-11 complex, which itself associates with the Mediator complex.

It localises to the nucleus. Its function is as follows. Component of the SRB8-11 complex. The SRB8-11 complex is a regulatory module of the Mediator complex which is itself involved in regulation of basal and activated RNA polymerase II-dependent transcription. The SRB8-11 complex may be involved in the transcriptional repression of a subset of genes regulated by Mediator. It may inhibit the association of the Mediator complex with RNA polymerase II to form the holoenzyme complex. This chain is Mediator of RNA polymerase II transcription subunit 13 (SSN2), found in Kluyveromyces lactis (strain ATCC 8585 / CBS 2359 / DSM 70799 / NBRC 1267 / NRRL Y-1140 / WM37) (Yeast).